Reading from the N-terminus, the 547-residue chain is Natural resistance-associated macrophage protein 1 (547 aa).

The segment at 1-30 (MTGDKDPQSVSRPNYGSISHPPSSEPQQEP) is disordered. Residues 1–54 (MTGDKDPQSVSRPNYGSISHPPSSEPQQEPLRTTYLSEKIPIPDTEPGTFSLRK) lie on the Cytoplasmic side of the membrane. Positions 8–17 (QSVSRPNYGS) are enriched in polar residues. The segment covering 21–30 (PPSSEPQQEP) has biased composition (low complexity). A helical membrane pass occupies residues 55–75 (LWAFTGPGFLMSIAFLDPGNI). At 76–81 (ESDLQA) the chain is on the extracellular side. Residues 82-102 (GAVAGFKLLWVLLWATVLGLL) traverse the membrane as a helical segment. The Cytoplasmic portion of the chain corresponds to 103-139 (CQRLAARLGVVTGKDLGEICHLYYPKVPRTLLWLTIE). A helical membrane pass occupies residues 140–160 (LAIVGSDMQEVIGTAIAFSLL). Over 161 to 164 (SAGR) the chain is Extracellular. A helical membrane pass occupies residues 165 to 185 (IPLWGGVLITIVDTFFFLFLD). Topologically, residues 186-193 (NYGLRKLE) are cytoplasmic. Residues 194–214 (AFFGILITIMALTFGYEYVVA) traverse the membrane as a helical segment. The Extracellular segment spans residues 215 to 240 (RPAQVALLQGLLLPSCPGCGRPELLQ). A helical transmembrane segment spans residues 241–261 (AVGIVGAIIMPHNIYLHSALV). Residues 262 to 286 (KSREIDRSRRPDIREANMYFLIEAS) lie on the Cytoplasmic side of the membrane. The helical transmembrane segment at 287–307 (IALSVSFFINLFVVAVFGQAF) threads the bilayer. Topologically, residues 308–346 (YQQTNEAAFNVCANSSLHDYAKIFPRNNLTVEVDIYQGG) are extracellular. Residues Asn321 and Asn335 are each glycosylated (N-linked (GlcNAc...) asparagine). The helical transmembrane segment at 347 to 367 (VMLGCVFGPAALYIWAVGLLA) threads the bilayer. Residues 368 to 394 (AGQSSTMTGTYAGQFVMEGFLRLRWSR) lie on the Cytoplasmic side of the membrane. Residues 395-415 (FARVLLTRSCAILPTVLVVVF) form a helical membrane-spanning segment. Topologically, residues 416–432 (RDLKDLSGLNDLLNVLQ) are extracellular. Residues 433–453 (SLLLPFAVLPILTFTSMPALM) form a helical membrane-spanning segment. Over 454–464 (QEFANGRLSKA) the chain is Cytoplasmic. Residues 465–485 (ITSFIMALVCAINLYFVVIYL) traverse the membrane as a helical segment. The Extracellular segment spans residues 486–492 (PSLPHPA). A helical transmembrane segment spans residues 493-513 (YFILVALLAIVYLGLTTYLVW). Residues 514-547 (TCFIAHGVTLLAHSSHQHFLYGLPDVEEKGKISG) lie on the Cytoplasmic side of the membrane.

The protein belongs to the NRAMP family.

The protein resides in the late endosome membrane. The protein localises to the lysosome membrane. The catalysed reaction is Zn(2+)(in) + H(+)(out) = Zn(2+)(out) + H(+)(in). It catalyses the reaction Fe(2+)(in) + H(+)(out) = Fe(2+)(out) + H(+)(in). The enzyme catalyses Mn(2+)(in) + H(+)(out) = Mn(2+)(out) + H(+)(in). Functionally, macrophage-specific antiporter that fluxes metal ions in either direction against a proton gradient. Localized to late endosomal lysosomal membranes, delivers bivalent cations from the cytosol into these acidic compartments where they may directly affect antimicrobial activity. Involved in iron metabolism and host natural resistance to infection with intracellular parasites. Pathogen resistance involves sequestration of Fe(2+) and Mn(2+), cofactors of both prokaryotic and eukaryotic catalases and superoxide dismutases, not only to protect the macrophage against its own generation of reactive oxygen species, but to deny the cations to the pathogen for synthesis of its protective enzymes. The protein is Natural resistance-associated macrophage protein 1 (SLC11A1) of Canis lupus familiaris (Dog).